Consider the following 327-residue polypeptide: GMP reductase (327 aa).

The active-site Thioimidate intermediate is the Cys176. Residue 205 to 228 coordinates NADP(+); it reads IIADGGIRTHGDIVKSIRFGATMV.

The protein belongs to the IMPDH/GMPR family. GuaC type 2 subfamily.

The catalysed reaction is IMP + NH4(+) + NADP(+) = GMP + NADPH + 2 H(+). Functionally, catalyzes the irreversible NADPH-dependent deamination of GMP to IMP. It functions in the conversion of nucleobase, nucleoside and nucleotide derivatives of G to A nucleotides, and in maintaining the intracellular balance of A and G nucleotides. In Helicobacter pylori (strain ATCC 700392 / 26695) (Campylobacter pylori), this protein is GMP reductase.